A 127-amino-acid polypeptide reads, in one-letter code: Protein ApaG (127 aa).

One can recognise an ApaG domain in the interval 3–127 (KTSIPDFQIT…FYLIAPLALH (125 aa)).

The chain is Protein ApaG from Bdellovibrio bacteriovorus (strain ATCC 15356 / DSM 50701 / NCIMB 9529 / HD100).